Here is a 242-residue protein sequence, read N- to C-terminus: Protein GrpE (242 aa).

The span at 1–10 (MAGENSSTET) shows a compositional bias: polar residues. A disordered region spans residues 1–64 (MAGENSSTET…QSTESTSKEK (64 aa)). Residues 11–20 (KNQEINEKTP) show a composition bias toward basic and acidic residues. Polar residues-rich tracts occupy residues 21–32 (EVQTFETNVEFE) and 40–59 (DTELSADNASIDTDIQSTES).

It belongs to the GrpE family. Homodimer.

Its subcellular location is the cytoplasm. Participates actively in the response to hyperosmotic and heat shock by preventing the aggregation of stress-denatured proteins, in association with DnaK and GrpE. It is the nucleotide exchange factor for DnaK and may function as a thermosensor. Unfolded proteins bind initially to DnaJ; upon interaction with the DnaJ-bound protein, DnaK hydrolyzes its bound ATP, resulting in the formation of a stable complex. GrpE releases ADP from DnaK; ATP binding to DnaK triggers the release of the substrate protein, thus completing the reaction cycle. Several rounds of ATP-dependent interactions between DnaJ, DnaK and GrpE are required for fully efficient folding. The chain is Protein GrpE from Trichodesmium erythraeum (strain IMS101).